The primary structure comprises 600 residues: Kelch-like protein 24 (600 aa).

A BTB domain is found at 66 to 133 (TDVIICVEGK…VYTGKVKITT (68 aa)). Residues 168 to 270 (CLGIQRFADT…HPNYFVQTVE (103 aa)) enclose the BACK domain. Kelch repeat units lie at residues 314–363 (VIVV…ALRN), 365–407 (ILVS…VLLG), 408–454 (KVYV…SCIG), 456–502 (LFVI…SLNN), 504–544 (IYVA…VCNG), and 546–592 (IYIL…TIHR).

Forms homodimers. Interacts with GRIK2. Component of the BCR(KLHL24) E3 ubiquitin ligase complex, composed of CUL3, RBX1 and KLHL24. Interacts with CUL3. Interacts with KRT14. Post-translationally, autoubiquitinated. Autoubiquitination leads to proteasomal degradation and is necessary to control KLHL24 levels. In terms of tissue distribution, expressed in the brain.

It localises to the perikaryon. The protein localises to the cell projection. The protein resides in the axon. It is found in the cytoplasm. Its subcellular location is the cell junction. It localises to the desmosome. The protein localises to the adherens junction. Functionally, controls KRT14 levels during keratinocytes differentiation. As part of the BCR(KLHL24) E3 ubiquitin ligase complex, mediates ubiquitination of KRT14. Specifically reduces kainate receptor-mediated currents in hippocampal neurons, most probably by modulating channel properties. Has a crucial role in cardiac development and function. This chain is Kelch-like protein 24 (Klhl24), found in Mus musculus (Mouse).